Reading from the N-terminus, the 233-residue chain is Ribonuclease 3 (233 aa).

The region spanning 4 to 126 is the RNase III domain; sequence LNKLMERLGH…IVGSIYIDAG (123 aa). Glu-39 contacts Mg(2+). Residue Asp-43 is part of the active site. The Mg(2+) site is built by Asp-112 and Glu-115. Glu-115 is an active-site residue. Residues 153-222 enclose the DRBM domain; it reads DAKSLLQEWL…AKRFLELLDD (70 aa).

It belongs to the ribonuclease III family. As to quaternary structure, homodimer. It depends on Mg(2+) as a cofactor.

It localises to the cytoplasm. It catalyses the reaction Endonucleolytic cleavage to 5'-phosphomonoester.. In terms of biological role, digests double-stranded RNA. Involved in the processing of primary rRNA transcript to yield the immediate precursors to the large and small rRNAs (23S and 16S). Processes some mRNAs, and tRNAs when they are encoded in the rRNA operon. Processes pre-crRNA and tracrRNA of type II CRISPR loci if present in the organism. The protein is Ribonuclease 3 of Coxiella burnetii (strain CbuG_Q212) (Coxiella burnetii (strain Q212)).